Reading from the N-terminus, the 580-residue chain is Tricyclene synthase TPS4, chloroplastic (580 aa).

The transit peptide at 1–41 (MLLNSSFISLPSFFKSQELGRTNLLIHRNGSPLLCYATNTN) directs the protein to the chloroplast. Positions 296, 334, 338, 475, and 478 each coordinate (2E)-geranyl diphosphate. D334 and D338 together coordinate Mg(2+). The DDXXD motif motif lies at 334–338 (DDIYD). The Mg(2+) site is built by N478, T482, and E486.

This sequence belongs to the terpene synthase family. Tpsb subfamily. Mg(2+) is required as a cofactor. Requires Mn(2+) as cofactor. Expressed in leaves.

It is found in the plastid. The protein localises to the chloroplast stroma. The enzyme catalyses (2E)-geranyl diphosphate = tricyclene + diphosphate. The catalysed reaction is (2E)-geranyl diphosphate = (E)-beta-ocimene + diphosphate. Its pathway is secondary metabolite biosynthesis; terpenoid biosynthesis. Promotes the emission of terpenes volatile organic compounds (VOC) in response to damage mediated by arthropod herbivores (e.g. Spodoptera exigua), probably to attract natural enemies of the herbivores. The protein is Tricyclene synthase TPS4, chloroplastic (TPS4) of Medicago truncatula (Barrel medic).